We begin with the raw amino-acid sequence, 374 residues long: Magnesium-chelatase subunit ChlI (374 aa).

47–54 (GDRGTGKS) is a binding site for ATP.

This sequence belongs to the Mg-chelatase subunits D/I family.

It carries out the reaction protoporphyrin IX + Mg(2+) + ATP + H2O = Mg-protoporphyrin IX + ADP + phosphate + 3 H(+). It participates in porphyrin-containing compound metabolism; chlorophyll biosynthesis. Involved in chlorophyll biosynthesis; introduces a magnesium ion into protoporphyrin IX to yield Mg-protoporphyrin IX. This chain is Magnesium-chelatase subunit ChlI (chlI), found in Nostoc sp. (strain PCC 7120 / SAG 25.82 / UTEX 2576).